Here is a 253-residue protein sequence, read N- to C-terminus: Blue-light photoreceptor (253 aa).

The region spanning Q6–K79 is the PAS domain. C56 carries the S-4a-FMN cysteine modification. The 54-residue stretch at S80–K133 folds into the PAC domain. An STAS domain is found at S142–Y253.

Post-translationally, FMN binds covalently to cysteine after exposure to blue light and this bond is spontaneously broken in the dark.

In terms of biological role, exhibits the same spectroscopical features and blue-light induced photochemistry as plants phototropins, with the reversible formation of a blue-shifted photoproduct, assigned to an FMN-cysteine thiol adduct. Positive regulator in the activation of the general stress transcription factor sigma-B. This is Blue-light photoreceptor from Listeria monocytogenes serovar 1/2a (strain ATCC BAA-679 / EGD-e).